The primary structure comprises 139 residues: uncharacterized protein (139 aa).

This is an uncharacterized protein from Dictyostelium discoideum (Social amoeba).